The sequence spans 839 residues: MLSLKSRGSWNVLRWIQVPRRTAVIPAKPSPMRRKRRRIKNVSSKDLDLRGIDPQDSRALEFKVKQLQEFTRNLKEQFKLADSNTKKLEAEEELAKSIPEDDDKRADELFGKLEAPAFEKPLPQPNLSTLILSAENQQLKKLIPVEIKERINDDGFLLARLIDKDNQNWNDIISKLYTTEKRLSDISMPIISSGILRKVKNLSYENIEKLDIMLLETKNGDITCFNRLMYETLLLNLSNLRPPTSGEEDKVTMKMRQLLERYDKSKEISPDVPSKMTQFSLNCCLKYSTKSVSFENMEYFLSKFKNDYGITPNRENYTTVIQFYVKFGVSKQAWDVFDTMKFLSSSHAPDVTTYNSVLHLCNRERDYAKAIDLYEEMLDRQLQPSIQTLNIMAKTMARASADNVISEGKADSLRLLGWKYIHTLESTFDHTKHETHFYHTLEAMMALAAYDGDVGFARALYYKYTTRKYKEVVKYWKGKFDSQKIWQTALDPQLFNLLLLAYANFRPNKLPILLGYEKGIKLRRNILNSVDYAGRYDLDDEIKVQLPMLPISDMNQAWQILAESRALWQFNLEFGGYYDLRDTPEGFDTTRLQEMVSKSATQDELQFNILHQVSQWKFQLVNHSILNPKSLTTFLTIPIKNGDRIEFMLRLKEFTFQQNDLESRIEKLYKGLKLVESRVEPNSHERDLAINQIEMDENVKWFASMKHKIVAKNYIYELMMKAASAFKDSAISKDAWQSRGEYRKTKLFQQMDSKRRIESDTQFAALMVQFFARQNMLTDALAIVMSTRKFIDWKYHMVKGLHEGLVKLEDEKSISILLDIVNKKSSIELLDEKIRDFQL.

Residues 1 to 59 (MLSLKSRGSWNVLRWIQVPRRTAVIPAKPSPMRRKRRRIKNVSSKDLDLRGIDPQDSRA) constitute a mitochondrion transit peptide. 2 PPR repeats span residues 313-347 (NRENYTTVIQFYVKFGVSKQAWDVFDTMKFLSSSH) and 350-384 (DVTTYNSVLHLCNRERDYAKAIDLYEEMLDRQLQP).

This sequence belongs to the CCM1 family. In terms of assembly, binds to mitochondrial small subunit 15S rRNA.

The protein resides in the mitochondrion. In terms of biological role, regulates mitochondrial small subunit maturation by controlling 15S rRNA 5'-end processing. Localizes to the 5' precursor of the 15S rRNA in a position that is subsequently occupied by mS47 in the mature yeast mtSSU. Uses structure and sequence-specific RNA recognition, binding to a single-stranded region of the precursor and specifically recognizing bases -6 to -1. The exchange of Ccm1 for mS47 is coupled to the irreversible removal of precursor rRNA that is accompanied by conformational changes of the mitoribosomal proteins uS5m and mS26. These conformational changes signal completion of 5'-end rRNA processing through protection of the mature 5'-end of the 15S rRNA and stabilization of mS47. The removal of the 5' precursor together with the dissociation of Ccm1 may be catalyzed by the 5'-3' exoribonuclease Pet127. Involved in the specific removal of group I introns in mitochondrial encoded transcripts. In Zygosaccharomyces rouxii (strain ATCC 2623 / CBS 732 / NBRC 1130 / NCYC 568 / NRRL Y-229), this protein is Mitochondrial 15S rRNA processing factor CCM1 (CCM1).